Consider the following 85-residue polypeptide: Small ribosomal subunit protein bS16c (85 aa).

Belongs to the bacterial ribosomal protein bS16 family.

It is found in the plastid. The protein resides in the chloroplast. This chain is Small ribosomal subunit protein bS16c, found in Oryza nivara (Indian wild rice).